Here is a 176-residue protein sequence, read N- to C-terminus: Conjugal transfer protein TraF (176 aa).

Residues M1–G24 form the signal peptide.

Belongs to the peptidase S26C family.

It is found in the periplasm. Involved in conjugal transfer of the plasmid. The protein is Conjugal transfer protein TraF (traF) of Agrobacterium fabrum (strain C58 / ATCC 33970) (Agrobacterium tumefaciens (strain C58)).